A 475-amino-acid chain; its full sequence is E3 ubiquitin-protein ligase TRIM62 (475 aa).

Residues 11–54 form an RING-type zinc finger; sequence CSICLSIYQDPVSLGCEHYFCRRCITEHWVRQEAQGARDCPECR. A B box-type zinc finger spans residues 88–128; that stretch reads RAARPCQAHDKVKLFCLTDRALLCFFCDEPALHEQHQVTGI. Residues C93, H96, C114, and H120 each coordinate Zn(2+). Residues 127–241 are a coiled coil; sequence GIDDAFDELQ…LQERLAETDR (115 aa). The B30.2/SPRY domain maps to 277–475; it reads PLQYTIWKSL…QPLRINTVRI (199 aa).

This sequence belongs to the TRIM/RBCC family. Interacts with the ubiquitin-conjugating enzyme, UBE2D2. Post-translationally, polyubiquitinated, autoubiquitinated in the presence of UBE2D2.

The protein localises to the cytoplasm. The enzyme catalyses S-ubiquitinyl-[E2 ubiquitin-conjugating enzyme]-L-cysteine + [acceptor protein]-L-lysine = [E2 ubiquitin-conjugating enzyme]-L-cysteine + N(6)-ubiquitinyl-[acceptor protein]-L-lysine.. It functions in the pathway protein modification; protein ubiquitination. Functionally, E3 ubiquitin ligase that plays a role in antifungal immunity by mediating 'Lys-27'-linked ubiquitination of CARD9 downstream of C-type lectin receptors; leading to CARD9 activation, followed by activation of NF-kappa-B and MAP kinase p38 pathways. E3 ubiquitin ligase activity is dependent on E2 ubiquitin-conjugating enzyme UBE2D2. The polypeptide is E3 ubiquitin-protein ligase TRIM62 (Homo sapiens (Human)).